A 286-amino-acid chain; its full sequence is MVAVIIKGNEVAEKKRAQLKEEVVKLKEQGIVPGLAVILVGEDPASRSYVKGKEKGCEQVGIYSELIEFPETITEERLLTEIDRLNGDDRINGILVQLPLPKHIEEKAIIERISPEKDVDGFHPISVGRMMTGQDTFLPCTPHGIVELVKETNLDISGKHVVVIGRSNIVGKPVGQLFLNENATVTYCHSKTQNMKELTKLADILIVAVGRPKMVTADYIKEGAVVIDVGVNRLETGKLCGDVDFDNVLDVAGYITPVPKGVGPMTITMLLHNTVESAKRAGVVCK.

Residues 165–167 (GRS), Ser-190, and Val-231 each bind NADP(+).

It belongs to the tetrahydrofolate dehydrogenase/cyclohydrolase family. Homodimer.

The catalysed reaction is (6R)-5,10-methylene-5,6,7,8-tetrahydrofolate + NADP(+) = (6R)-5,10-methenyltetrahydrofolate + NADPH. It carries out the reaction (6R)-5,10-methenyltetrahydrofolate + H2O = (6R)-10-formyltetrahydrofolate + H(+). It participates in one-carbon metabolism; tetrahydrofolate interconversion. In terms of biological role, catalyzes the oxidation of 5,10-methylenetetrahydrofolate to 5,10-methenyltetrahydrofolate and then the hydrolysis of 5,10-methenyltetrahydrofolate to 10-formyltetrahydrofolate. The polypeptide is Bifunctional protein FolD (Bacillus cereus (strain ZK / E33L)).